We begin with the raw amino-acid sequence, 327 residues long: Phenylalanine--tRNA ligase alpha subunit (327 aa).

Glutamate 252 provides a ligand contact to Mg(2+).

The protein belongs to the class-II aminoacyl-tRNA synthetase family. Phe-tRNA synthetase alpha subunit type 1 subfamily. As to quaternary structure, tetramer of two alpha and two beta subunits. Requires Mg(2+) as cofactor.

Its subcellular location is the cytoplasm. It catalyses the reaction tRNA(Phe) + L-phenylalanine + ATP = L-phenylalanyl-tRNA(Phe) + AMP + diphosphate + H(+). The chain is Phenylalanine--tRNA ligase alpha subunit from Shewanella putrefaciens (strain CN-32 / ATCC BAA-453).